A 574-amino-acid chain; its full sequence is MEYLVGTPRSTYDVVVLGSGAGALTAAATAARAGKSVVVLEKASLLGGTSAISGGMLWIAANHHAREAGFEDTADAALEYVRAVSRGRAREELLAAAVTRGDSMLRFLEHELGVTFIYLDNFPDYRQDLPGAVDGGRTIEPELANIADLLGDLADRVRSDGRAPFTMQEYEDWGAFTRFPWDELDARAKAGLVAKGRALVAMLLAAAIREGAHVAVEARGERLIYSGQGADDGGRVTGVVLASGERIDATEAVVIATGGFEWDHSLADSMLASRLYTMCSPPTNEGDGLRMAQRIGAQTRGTREAWWAPMSITGDTRDGRPIGTLLRFERQGPGSIMVNRHGKRFANESQNYNDLARCLQSWDSPANTTLNTPAHVVFDQSYLERYGVLSHRAGEPTPDYLIEGATLPELAAKIGVPAENLVATVERFNAFAVTGEDPDFHRGQTAYDKYWGDADNVWPNPSLGPLEQGPFYALEVVNGAFGTNGGIATDGAARVLDVDGAPIAGLFAVGNATESAYAAGYPGAGATLGPLMTMGYLAGRTIAGQAAGYDDGAAAASAAELTDLAEPVLAEAAR.

This sequence belongs to the FAD-dependent oxidoreductase 2 family. Monomer. Homodimer. The cofactor is FAD.

It catalyses the reaction 4-oxocyclohexane-1-carboxylate + O2 = 4-oxocyclohex-2-ene-1-carboxylate + H2O2. With respect to regulation, inhibited by 5,5'-dithio-bis(2- nitrobenzoate) and N-bromosuccinimide, but not by thiol and chelating reagents. Desaturase involved in a cyclohexanecarboxylate (CHCA) degradation pathway. Catalyzes the conversion of 4-oxocyclohexanecarboxylate (4-oxoCHCA) to 4-oxocyclohexenecarboxylate. Is highly specific for 4-oxocyclohexanecarboxylic acid and shows only slight activity with 4-oxo-2-methylcyclohex-2-enecarboxylic acid. In Sinomonas cyclohexanicum (Corynebacterium cyclohexanicum), this protein is 4-oxocyclohexanecarboxylate 2-dehydrogenase.